Consider the following 481-residue polypeptide: MAEAAAPGTTATTSGAGAAAAAVAAASLTSIPTVAAPSPGAGGGGGGSDGSGGGWTKQVTCRYFMHGVCKEGDNCRYSHDLSDSPYGVVCKYFQRGYCVYGDRCRYEHSKPLKQEEVTATDLSAKPSLAASSSLSSGVGSLAEMNSGEAESRNPSFPTVGAGSEDWVNAIEFVPGQPYCGRTAPSCTEVPPQGSVTKEESEKEPTTVETKKQLCPYAAVGECRYGENCVYLHGDSCDMCGLQVLHPVDAAQRSQHIKSCIEAHEKDMELSFAVQRTKDMVCGICMEVVYEKANPSERRFGILSNCNHTYCLKCIRKWRSAKQFESKIIKSCPECRITSNFVIPSEYWVEEKEEKQKLIQKYKEAMSNKACRYFDEGRGSCPFGGNCFYKHAYPDGRREEPQRQKVGTSSRYRAQRRSHFWELIEERENNPFDNDEEEVVTFELGEMLLMLLAAGGDDELTDSEDEWDLFHDELEDFYDLDL.

3 consecutive C3H1-type zinc fingers follow at residues W55–S82, S84–P111, and E208–S235. The tract at residues C236–H263 is makorin-type Cys-His. An RING-type zinc finger spans residues C281–R335. The segment at A364–P393 adopts a C3H1-type 4 zinc-finger fold.

As to quaternary structure, interacts with p53/TP53 and CDKN1A. Interacts with TERT, modulating telomere length homeostasis. Auto-ubiquitinated; which leads to proteasomal degradation. Highly expressed in embryo, in specific cell types of the central nervous system, in brain with the strongest levels of expression in the mantle layers and in testis. Moderate to low levels in somatic tissues.

It carries out the reaction S-ubiquitinyl-[E2 ubiquitin-conjugating enzyme]-L-cysteine + [acceptor protein]-L-lysine = [E2 ubiquitin-conjugating enzyme]-L-cysteine + N(6)-ubiquitinyl-[acceptor protein]-L-lysine.. The protein operates within protein modification; protein ubiquitination. Functionally, E3 ubiquitin ligase catalyzing the covalent attachment of ubiquitin moieties onto substrate proteins. These substrates include FILIP1, p53/TP53, CDKN1A and TERT. Keeps cells alive by suppressing p53/TP53 under normal conditions, but stimulates apoptosis by repressing CDKN1A under stress conditions. Acts as a negative regulator of telomerase. Has negative and positive effects on RNA polymerase II-dependent transcription. The polypeptide is E3 ubiquitin-protein ligase makorin-1 (Mkrn1) (Mus musculus (Mouse)).